The primary structure comprises 398 residues: Argininosuccinate synthase (398 aa).

8 to 16 (AYSGGLDTS) serves as a coordination point for ATP. Y87 lines the L-citrulline pocket. G117 provides a ligand contact to ATP. 3 residues coordinate L-aspartate: T119, N123, and D124. N123 contacts L-citrulline. Residues R127, S175, E260, and Y272 each contribute to the L-citrulline site.

The protein belongs to the argininosuccinate synthase family. Type 1 subfamily. In terms of assembly, homotetramer.

It is found in the cytoplasm. The catalysed reaction is L-citrulline + L-aspartate + ATP = 2-(N(omega)-L-arginino)succinate + AMP + diphosphate + H(+). Its pathway is amino-acid biosynthesis; L-arginine biosynthesis; L-arginine from L-ornithine and carbamoyl phosphate: step 2/3. The chain is Argininosuccinate synthase from Mycobacterium tuberculosis (strain ATCC 25618 / H37Rv).